The primary structure comprises 549 residues: DNA mismatch repair protein MutL (549 aa).

Belongs to the DNA mismatch repair MutL/HexB family.

In terms of biological role, this protein is involved in the repair of mismatches in DNA. It is required for dam-dependent methyl-directed DNA mismatch repair. May act as a 'molecular matchmaker', a protein that promotes the formation of a stable complex between two or more DNA-binding proteins in an ATP-dependent manner without itself being part of a final effector complex. This Pseudothermotoga lettingae (strain ATCC BAA-301 / DSM 14385 / NBRC 107922 / TMO) (Thermotoga lettingae) protein is DNA mismatch repair protein MutL.